We begin with the raw amino-acid sequence, 797 residues long: Interphotoreceptor matrix proteoglycan 1 (797 aa).

The first 20 residues, 1–20, serve as a signal peptide directing secretion; sequence MYLETRRAIFVFWIFLQVQG. 4 N-linked (GlcNAc...) asparagine glycosylation sites follow: Asn42, Asn143, Asn191, and Asn215. The 123-residue stretch at 232 to 354 folds into the SEA 1 domain; that stretch reads EEQRVELSVS…QPEIYLTATD (123 aa). 4 O-linked (GalNAc...) threonine glycosylation sites follow: Thr403, Thr421, Thr432, and Thr442. One can recognise an SEA 2 domain in the interval 571 to 684; that stretch reads RELVVFFSLR…YSLNIEPADQ (114 aa). Residues Asn592 and Asn616 are each glycosylated (N-linked (GlcNAc...) asparagine). A Heparin- and hyaluronan-binding motif is present at residues 621-629; that stretch reads KQLEILNFR. N-linked (GlcNAc...) asparagine glycosylation is found at Asn630 and Asn648.

Post-translationally, the N-terminus is blocked. In terms of processing, highly glycosylated (N- and O-linked carbohydrates and sialic acid). Expressed in the retina (at protein level). In the retina, specifically expressed by cone and rod photoreceptor cells. Localizes to cone and rod photoreceptor cells surrounding the interphotoreceptor matrix of the retina.

The protein resides in the cell projection. It is found in the cilium. The protein localises to the photoreceptor outer segment. It localises to the secreted. Its subcellular location is the extracellular space. The protein resides in the extracellular matrix. It is found in the interphotoreceptor matrix. The protein localises to the photoreceptor inner segment. In terms of biological role, chondroitin sulfate-, heparin- and hyaluronan-binding protein. May serve to form a basic macromolecular scaffold comprising the insoluble interphotoreceptor matrix. This chain is Interphotoreceptor matrix proteoglycan 1, found in Homo sapiens (Human).